We begin with the raw amino-acid sequence, 435 residues long: NADH-quinone oxidoreductase subunit D (435 aa).

The protein belongs to the complex I 49 kDa subunit family. NDH-1 is composed of 14 different subunits. Subunits NuoB, C, D, E, F, and G constitute the peripheral sector of the complex.

It localises to the cell inner membrane. The enzyme catalyses a quinone + NADH + 5 H(+)(in) = a quinol + NAD(+) + 4 H(+)(out). Its function is as follows. NDH-1 shuttles electrons from NADH, via FMN and iron-sulfur (Fe-S) centers, to quinones in the respiratory chain. The immediate electron acceptor for the enzyme in this species is believed to be ubiquinone. Couples the redox reaction to proton translocation (for every two electrons transferred, four hydrogen ions are translocated across the cytoplasmic membrane), and thus conserves the redox energy in a proton gradient. In Xanthomonas campestris pv. campestris (strain 8004), this protein is NADH-quinone oxidoreductase subunit D.